The primary structure comprises 314 residues: Protein phosphatase PTC7 homolog fig (314 aa).

In terms of domain architecture, PPM-type phosphatase spans 43-309 (PYLVTVVQGR…DDITLILSSV (267 aa)). Residues aspartate 87, glycine 88, and aspartate 232 each contribute to the Mn(2+) site.

Belongs to the PP2C family. Mg(2+) is required as a cofactor. The cofactor is Mn(2+).

It carries out the reaction O-phospho-L-seryl-[protein] + H2O = L-seryl-[protein] + phosphate. The catalysed reaction is O-phospho-L-threonyl-[protein] + H2O = L-threonyl-[protein] + phosphate. This chain is Protein phosphatase PTC7 homolog fig, found in Drosophila simulans (Fruit fly).